The sequence spans 576 residues: Arginine--tRNA ligase (576 aa).

Residues 123-133 (PNIGKEMHVGH) carry the 'HIGH' region motif.

Belongs to the class-I aminoacyl-tRNA synthetase family. As to quaternary structure, monomer.

The protein localises to the cytoplasm. The catalysed reaction is tRNA(Arg) + L-arginine + ATP = L-arginyl-tRNA(Arg) + AMP + diphosphate. The sequence is that of Arginine--tRNA ligase from Wigglesworthia glossinidia brevipalpis.